The chain runs to 213 residues: Ribosome maturation factor RimM (213 aa).

Residues 99–175 enclose the PRC barrel domain; sequence DQDAAYISDL…RITMRLPEGL (77 aa). Positions 182–213 are disordered; that stretch reads TATAREPRARRTRKRGLRKPITGADATPPDSQ. The segment covering 189–199 has biased composition (basic residues); the sequence is RARRTRKRGLR.

It belongs to the RimM family. As to quaternary structure, binds ribosomal protein uS19.

It localises to the cytoplasm. Its function is as follows. An accessory protein needed during the final step in the assembly of 30S ribosomal subunit, possibly for assembly of the head region. Essential for efficient processing of 16S rRNA. May be needed both before and after RbfA during the maturation of 16S rRNA. It has affinity for free ribosomal 30S subunits but not for 70S ribosomes. The polypeptide is Ribosome maturation factor RimM (Acidobacterium capsulatum (strain ATCC 51196 / DSM 11244 / BCRC 80197 / JCM 7670 / NBRC 15755 / NCIMB 13165 / 161)).